The sequence spans 437 residues: Proline--tRNA ligase (437 aa).

This sequence belongs to the class-II aminoacyl-tRNA synthetase family. ProS type 2 subfamily. In terms of assembly, homodimer.

The protein resides in the cytoplasm. The catalysed reaction is tRNA(Pro) + L-proline + ATP = L-prolyl-tRNA(Pro) + AMP + diphosphate. Functionally, catalyzes the attachment of proline to tRNA(Pro) in a two-step reaction: proline is first activated by ATP to form Pro-AMP and then transferred to the acceptor end of tRNA(Pro). The sequence is that of Proline--tRNA ligase from Acidiphilium cryptum (strain JF-5).